A 339-amino-acid polypeptide reads, in one-letter code: Heat-inducible transcription repressor HrcA (339 aa).

The protein belongs to the HrcA family.

Negative regulator of class I heat shock genes (grpE-dnaK-dnaJ and groELS operons). Prevents heat-shock induction of these operons. This chain is Heat-inducible transcription repressor HrcA, found in Clostridium perfringens (strain 13 / Type A).